We begin with the raw amino-acid sequence, 226 residues long: NADH-quinone oxidoreductase subunit B 2 (226 aa).

Positions 37, 38, 103, and 132 each coordinate [4Fe-4S] cluster.

It belongs to the complex I 20 kDa subunit family. As to quaternary structure, NDH-1 is composed of 14 different subunits. Subunits NuoB, C, D, E, F, and G constitute the peripheral sector of the complex. Requires [4Fe-4S] cluster as cofactor.

It localises to the cell membrane. The catalysed reaction is a quinone + NADH + 5 H(+)(in) = a quinol + NAD(+) + 4 H(+)(out). Functionally, NDH-1 shuttles electrons from NADH, via FMN and iron-sulfur (Fe-S) centers, to quinones in the respiratory chain. The immediate electron acceptor for the enzyme in this species is believed to be a menaquinone. Couples the redox reaction to proton translocation (for every two electrons transferred, four hydrogen ions are translocated across the cytoplasmic membrane), and thus conserves the redox energy in a proton gradient. This chain is NADH-quinone oxidoreductase subunit B 2, found in Salinispora arenicola (strain CNS-205).